The primary structure comprises 65 residues: Large ribosomal subunit protein bL35 (65 aa).

Positions 1–22 are disordered; sequence MPKIKTVRGAAKRFKKTGKGGF. Positions 10 to 22 are enriched in basic residues; that stretch reads AAKRFKKTGKGGF.

This sequence belongs to the bacterial ribosomal protein bL35 family.

This is Large ribosomal subunit protein bL35 from Escherichia coli O127:H6 (strain E2348/69 / EPEC).